The sequence spans 416 residues: Phakinin (416 aa).

The tract at residues 1–48 (MSERRVAMDLPSGSNASMPLQRHRVSSLRGTRSPSSLDSPPASRTSAV) is disordered. Serine 2 carries the post-translational modification N-acetylserine. The tract at residues 2-115 (SERRVAMDLP…HATAEDLGGC (114 aa)) is head. Serine 27, serine 33, serine 36, and serine 91 each carry phosphoserine. Residues 28-48 (LRGTRSPSSLDSPPASRTSAV) show a composition bias toward polar residues. Positions 105–416 (NHATAEDLGG…HALLDREESN (312 aa)) constitute an IF rod domain. 2 coiled-coil regions span residues 199-240 (FRKA…SLSR) and 314-391 (LAAA…ERAH). The tract at residues 397–416 (GQLQKDVASYHALLDREESN) is tail.

This sequence belongs to the intermediate filament family. As to quaternary structure, part of a complex required for lens intermediate filament formation composed of BFSP1, BFSP2, and CRYAA. Found in a complex composed of PPL (via C-terminal linker domain), BFSP1 and BFSP2 in the retinal lens. Within the complex interacts with PPL (via C-terminal linker domain) and with BFSP1. Identified in a complex that contains VIM, EZR, AHNAK, BFSP1, BFSP2, ANK2, PLEC, PRX and spectrin. Interacts with LGSN. Interacts with VIM. As to expression, expressed in the deep and shallow cortices of the retina lens (at protein level).

It is found in the cell membrane. The protein localises to the cytoplasm. Its subcellular location is the cytoskeleton. The protein resides in the cell cortex. Its function is as follows. Required for the correct formation of lens intermediate filaments as part of a complex composed of BFSP1, BFSP2 and CRYAA. Plays a role in maintenance of retinal lens optical clarity. The protein is Phakinin of Rattus norvegicus (Rat).